The sequence spans 112 residues: MAM and fibronectin type III domain-containing protein 2 (112 aa).

In terms of tissue distribution, component of the acid-insoluble and acid-soluble organic matrix of the aragonitic skeleton (at protein level).

Its subcellular location is the secreted. This Acropora millepora (Staghorn coral) protein is MAM and fibronectin type III domain-containing protein 2.